Consider the following 513-residue polypeptide: Sphingolipid C9-methyltransferase (513 aa).

2 consecutive transmembrane segments (helical) span residues 52–72 and 74–94; these read ILFSILALVPGYITYKLGLGF and TWVFFFLILAIPILMAYWSIM. S-adenosyl-L-methionine contacts are provided by residues 222–223, 259–267, 285–290, and 315–316; these read YT, VLDIGCGWG, TLGRNQ, and YR.

It belongs to the CFA/CMAS family.

The protein localises to the membrane. The catalysed reaction is a (4E,8E)-4-sphinga-4,8-dienine ceramide + S-adenosyl-L-methionine = a 9-methyl-(4E,8E)-sphinga-4,8-dienine ceramide + S-adenosyl-L-homocysteine + H(+). It functions in the pathway lipid metabolism; sphingolipid metabolism. Its function is as follows. Catalyzes methylation of the sphingoid base component of glucosylceramides (GluCers) at the C9-position. Sphingolipid C9-methylation requires 4,8-desaturated ceramides as substrates. Glucosylceramides play important roles in growth, differentiation and pathogenicity. The methyl group at the C9-position distinguishes fungal glucosylceramides from those of plants and animals, and may thus play a role in host-pathogen interactions enabling the host to recognize the fungal attack and initiate specific defense responses. Not necessary for vegetative growth at low temperatures, but plays a role in hyphal formation on solid medium. This is Sphingolipid C9-methyltransferase from Candida albicans (strain SC5314 / ATCC MYA-2876) (Yeast).